Here is a 695-residue protein sequence, read N- to C-terminus: Electrogenic aspartate/glutamate antiporter Aralar, mitochondrial (695 aa).

An N-terminal domain region spans residues 1 to 310 (MPMHIPFPFN…DYSDLSNIAP (310 aa)). The Mitochondrial intermembrane portion of the chain corresponds to 2–345 (PMHIPFPFNW…FIQVLESSYR (344 aa)). EF-hand domains are found at residues 71-104 (FNDE…GLLC), 105-140 (TPDA…TELH), 142-175 (KIPF…LLHD), and 176-211 (FHEE…VKRH). Ca(2+)-binding residues include Asp-84, Ser-86, Asp-88, Leu-90, Glu-95, Asp-118, Asn-122, Thr-124, and Asp-129. 3 residues coordinate Ca(2+): Asp-189, Thr-193, and Asp-200. The segment at 311-327 (EHYTKHMTHRLAEIKAV) is linker loop domain. Residues 336–627 (FIQVLESSYR…RLFYVDFGGT (292 aa)) form a carrier domain region. 3 Solcar repeats span residues 340–431 (LESS…VRDK), 439–523 (IPTW…TKAM), and 531–619 (NHPL…LQRL). The helical transmembrane segment at 346-363 (FTLGSFAGAVGATVVYPI) threads the bilayer. The Mitochondrial matrix portion of the chain corresponds to 364–405 (DLVKTRMQNQRAGSYIGEVAYRNSWDCFKKVVRHEGFMGLYR). A helical transmembrane segment spans residues 406 to 425 (GLLPQLMGVAPEKAIKLTVN). At 426–448 (DLVRDKLTDKKGNIPTWAEVLAG) the chain is on the mitochondrial intermembrane side. Residues 449–462 (GCAGASQVVFTNPL) traverse the membrane as a helical segment. Topologically, residues 463-497 (EIVKIRLQVAGEIASGSKIRAWSVVRELGLFGLYK) are mitochondrial matrix. The chain crosses the membrane as a helical span at residues 498-517 (GARACLLRDVPFSAIYFPTY). Topologically, residues 518–536 (AHTKAMMADKDGYNHPLTL) are mitochondrial intermembrane. The helical transmembrane segment at 537 to 554 (LAAGAIAGVPAASLVTPA) threads the bilayer. Topologically, residues 555–593 (DVIKTRLQVVARSGQTTYTGVWDATKKIMAEEGPRAFWK) are mitochondrial matrix. Residues 594-613 (GTAARVFRSSPQFGVTLVTY) form a helical membrane-spanning segment. Residues 614–695 (ELLQRLFYVD…AASPSTATGS (82 aa)) are Mitochondrial intermembrane-facing. The interval 628–695 (QPKGSEAHKI…AASPSTATGS (68 aa)) is C-terminal domain.

Belongs to the mitochondrial carrier (TC 2.A.29) family. Homodimer (via N-terminus). The cofactor is Ca(2+). As to expression, expressed throughout the body in both males and females, including in ovaries and testes. In terms of tissue distribution, specifically expressed in female ovaries. Expressed throughout the body in both males and females but absent from ovaries and testes.

It localises to the mitochondrion inner membrane. The enzyme catalyses L-aspartate(in) + L-glutamate(out) + H(+)(out) = L-aspartate(out) + L-glutamate(in) + H(+)(in). It catalyses the reaction 3-sulfino-L-alanine(out) + L-glutamate(in) + H(+)(in) = 3-sulfino-L-alanine(in) + L-glutamate(out) + H(+)(out). It carries out the reaction L-2-aminoadipate(in) + L-glutamate(out) + H(+)(out) = L-2-aminoadipate(out) + L-glutamate(in) + H(+)(in). The catalysed reaction is L-glutamine(in) + L-glutamate(out) + Na(+)(out) + H(+)(out) = L-glutamine(out) + L-glutamate(in) + Na(+)(in) + H(+)(in). With respect to regulation, activated by Ca(2+). Inhibited by p-chloromercuribenzoate, pyrocarbonate, mersalyl, tannic acid and N-ethylmaleimide. In terms of biological role, mitochondrial electrogenic aspartate/glutamate antiporter that favors efflux of aspartate and entry of glutamate and proton within the mitochondria as part of the malate-aspartate shuttle. Also mediates the exchange of L-cysteinesulfinate (3-sulfino-L-alanine) for L-glutamate. Necessary for gamma-aminobutyric acid (GABA) uptake in brain mitochondria in response to increased mitochondrial membrane polarization; does not possess detectable GABA transport activity but role may be indirect. Functionally, possesses transport activity towards L-aspartate, L-glutamate and L-cysteinesulfinate (3-sulfino-L-alanine). L-glutamine transport activity is undetectable. GABA transport activity is undetectable. Possesses transport activity towards L-aspartate, L-glutamate and L-cysteinesulfinate (3-sulfino-L-alanine). Has a wider substrate specificity range that includes L-2-aminoadipate and L-glutamine. GABA transport activity is undetectable. This Drosophila melanogaster (Fruit fly) protein is Electrogenic aspartate/glutamate antiporter Aralar, mitochondrial.